We begin with the raw amino-acid sequence, 215 residues long: Large ribosomal subunit protein bL25 (215 aa).

Acidic residues predominate over residues 192 to 202; it reads EEEEVEEEVAE. Positions 192–215 are disordered; sequence EEEEVEEEVAEPEVIKRKEEEEEE. The span at 204 to 215 shows a compositional bias: basic and acidic residues; that stretch reads EVIKRKEEEEEE.

It belongs to the bacterial ribosomal protein bL25 family. CTC subfamily. In terms of assembly, part of the 50S ribosomal subunit; part of the 5S rRNA/L5/L18/L25 subcomplex. Contacts the 5S rRNA. Binds to the 5S rRNA independently of L5 and L18.

In terms of biological role, this is one of the proteins that binds to the 5S RNA in the ribosome where it forms part of the central protuberance. The chain is Large ribosomal subunit protein bL25 from Thermotoga neapolitana (strain ATCC 49049 / DSM 4359 / NBRC 107923 / NS-E).